We begin with the raw amino-acid sequence, 125 residues long: Holo-[acyl-carrier-protein] synthase (125 aa).

Mg(2+) is bound by residues aspartate 6 and glutamate 55.

It belongs to the P-Pant transferase superfamily. AcpS family. It depends on Mg(2+) as a cofactor.

Its subcellular location is the cytoplasm. It carries out the reaction apo-[ACP] + CoA = holo-[ACP] + adenosine 3',5'-bisphosphate + H(+). In terms of biological role, transfers the 4'-phosphopantetheine moiety from coenzyme A to a Ser of acyl-carrier-protein. The sequence is that of Holo-[acyl-carrier-protein] synthase from Chlorobium phaeovibrioides (strain DSM 265 / 1930) (Prosthecochloris vibrioformis (strain DSM 265)).